Consider the following 902-residue polypeptide: Gamma-tubulin complex component 2 (902 aa).

Tyr-83 is subject to Phosphotyrosine. The segment at Glu-875–Gln-902 is disordered.

This sequence belongs to the TUBGCP family. Component of the gamma-tubulin ring complex (gTuRC) consisting of TUBGCP2, TUBGCP3, TUBGCP4, TUBGCP5 and TUBGCP6 and gamma-tubulin TUBG1 or TUBG2. TUBGCP2, TUBGCP3, TUBGCP4, TUBGCP5 and TUBGCP6 assemble in a 5:5:2:1:1 stoichiometry; each is associated with a gamma-tubulin, thereby arranging 14 gamma-tubulins in a helical manner. Gamma-tubulin at the first position is blocked by TUBGCP3 at the last position, allowing 13 protafilaments to grow into a microtubule. The gTuRC (via TUBGCP3 and TUBGCP6) interacts with ACTB and MZT1; the interactions form a luminal bridge that stabilizes the initial structure during complex assembly. The gTuRC (via TUBGCP2) interacts with MZT2A/MZT2B and CDK5RAP2 (via CM1 motif); the interactions play a role in gTuRC activation. Interacts with ATF5; the ATF5:PCNT:polyglutamylated tubulin (PGT) tripartite unites the mother centriole and the pericentriolar material (PCM) in the centrosome.

It localises to the cytoplasm. The protein resides in the cytoskeleton. It is found in the microtubule organizing center. The protein localises to the centrosome. Its function is as follows. Component of the gamma-tubulin ring complex (gTuRC) which mediates microtubule nucleation. The gTuRC regulates the minus-end nucleation of alpha-beta tubulin heterodimers that grow into microtubule protafilaments, a critical step in centrosome duplication and spindle formation. Plays a role in neuronal migration. The protein is Gamma-tubulin complex component 2 (TUBGCP2) of Pongo abelii (Sumatran orangutan).